A 521-amino-acid polypeptide reads, in one-letter code: AAA ATPase forming ring-shaped complexes (521 aa).

Residues 4–44 are a coiled coil; that stretch reads TEDLAALNDRLMAKNHALAEALSRAGKELTKAKSQLAQLAQ. Residue 235–240 participates in ATP binding; that stretch reads GNGKTM.

Belongs to the AAA ATPase family. Homohexamer. Assembles into a hexameric ring structure.

The chain is AAA ATPase forming ring-shaped complexes from Bifidobacterium longum (strain NCC 2705).